A 219-amino-acid polypeptide reads, in one-letter code: Probable glucosamine 6-phosphate N-acetyltransferase (219 aa).

Residues 42-198 (MKVRPLKDTD…EGPTLKRNAT (157 aa)) form the N-acetyltransferase domain. Residues threonine 64, 111 to 114 (KFIH), and 123 to 125 (EDV) contribute to the substrate site. 133–138 (GKQLGK) is an acetyl-CoA binding site. Substrate-binding positions include 154-155 (YK) and arginine 186.

Belongs to the acetyltransferase family. GNA1 subfamily.

It catalyses the reaction D-glucosamine 6-phosphate + acetyl-CoA = N-acetyl-D-glucosamine 6-phosphate + CoA + H(+). The protein operates within nucleotide-sugar biosynthesis; UDP-N-acetyl-alpha-D-glucosamine biosynthesis; N-acetyl-alpha-D-glucosamine 1-phosphate from alpha-D-glucosamine 6-phosphate (route I): step 1/2. The sequence is that of Probable glucosamine 6-phosphate N-acetyltransferase from Drosophila melanogaster (Fruit fly).